Here is a 947-residue protein sequence, read N- to C-terminus: Protein RRC1-like (947 aa).

Basic and acidic residues predominate over residues 1–11 (MVKDEFFLDHP). 2 disordered regions span residues 1 to 35 (MVKD…RMKQ) and 63 to 167 (PNDN…DELP). A compositionally biased stretch (basic residues) spans 12-34 (GRKHRSRNTEKKKKPRRRERRMK). Composition is skewed to basic and acidic residues over residues 66–84 (NKLK…DSIS) and 104–155 (KGPE…DHNS). Residues 187–268 (TNLYVVNLSS…YELKIGWGKV (82 aa)) form the RRM domain. An SURP motif repeat occupies 336-379 (IIDTMALNVLDGGCAFEQAIMERGRGNPLFNFLFELGSKEHTYY). Residues 412–434 (PPLPATRSPEHGKESRGTYAAGK) are disordered. The 146-residue stretch at 444-589 (LTDSQRDEFE…GLRATFLRSR (146 aa)) folds into the CID domain. An SAP domain is found at 638 to 672 (LMNRPISELERRCRHNGLSLLGGREMMVARLVCLK). 2 disordered regions span residues 752 to 797 (REDD…PENE) and 846 to 947 (GLSG…RGMR). 3 stretches are compositionally biased toward basic and acidic residues: residues 854-876 (LPEK…RSES), 888-916 (LTRE…LDKD), and 924-947 (SSRE…RGMR).

In terms of tissue distribution, expressed in leaves, inflorescence stems, roots, flower buds, open flowers and siliques.

Probable SR-like splicing factor. The chain is Protein RRC1-like from Arabidopsis thaliana (Mouse-ear cress).